The chain runs to 123 residues: Unknown 12C protein (123 aa).

An N-terminal signal peptide occupies residues 1 to 17 (MMSALFLVLSVSLLVSG).

In terms of processing, contains 6 disulfide bonds. In terms of tissue distribution, expressed in acontia, a specialised envenomation structure laden with batteries of venom-containing nematocysts found only in the superfamily Metridioidea.

It localises to the secreted. Its subcellular location is the nematocyst. Cysteine-rich protein with probable toxin activity. The protein is Unknown 12C protein of Calliactis polypus (Hermit crab anemone).